The chain runs to 410 residues: MKEELIERFTRYVKIDTQSNEDSHTVPTTPGQIEFGKLLVEELKEVGLTEVTMDDNGYVMATLPANTDKDVPVIGFLAHLDTATDFTGKNVKPQIHENFDGNAITLNEELNIVLTPEQFPELPSYKGHTIITTDGTTLLGADDKAGLTEIMVAMNYLIHNPQIKHGKIRVAFTPDEEIGRGPAHFDVEAFGASFAYMMDGGPLGGLEYESFNAAGAKLTFNGTNTHPGTAKNKMRNATKLAMEFNGHLPVEEAPEYTEGYEGFYHLLSLNGDVEQSKAYYIIRDFDRKNFEARKNTIENIVKQMQEKYGQDAVVLEMNDQYYNMLEKIEPVREIVDIAYEAMKSLNIEPNIHPIRGGTDGSQLSYMGLPTPNIFTGGENYHGKFEYVSVDVMEKAVQVIIEIARRFEEQA.

Histidine 79 provides a ligand contact to Zn(2+). Aspartate 81 is an active-site residue. A Zn(2+)-binding site is contributed by aspartate 142. The active-site Proton acceptor is the glutamate 176. Zn(2+)-binding residues include glutamate 177, aspartate 199, and histidine 381.

This sequence belongs to the peptidase M20B family. It depends on Zn(2+) as a cofactor.

The protein resides in the cytoplasm. The enzyme catalyses Release of the N-terminal residue from a tripeptide.. Cleaves the N-terminal amino acid of tripeptides. This Bacillus anthracis (strain A0248) protein is Peptidase T.